The following is a 508-amino-acid chain: Light-independent protochlorophyllide reductase subunit B (508 aa).

A [4Fe-4S] cluster-binding site is contributed by aspartate 36. Aspartate 294 acts as the Proton donor in catalysis. Residue 429-430 (GM) coordinates substrate.

Belongs to the ChlB/BchB/BchZ family. Protochlorophyllide reductase is composed of three subunits; ChlL, ChlN and ChlB. Forms a heterotetramer of two ChlB and two ChlN subunits. [4Fe-4S] cluster is required as a cofactor.

The enzyme catalyses chlorophyllide a + oxidized 2[4Fe-4S]-[ferredoxin] + 2 ADP + 2 phosphate = protochlorophyllide a + reduced 2[4Fe-4S]-[ferredoxin] + 2 ATP + 2 H2O. It functions in the pathway porphyrin-containing compound metabolism; chlorophyll biosynthesis (light-independent). Component of the dark-operative protochlorophyllide reductase (DPOR) that uses Mg-ATP and reduced ferredoxin to reduce ring D of protochlorophyllide (Pchlide) to form chlorophyllide a (Chlide). This reaction is light-independent. The NB-protein (ChlN-ChlB) is the catalytic component of the complex. This is Light-independent protochlorophyllide reductase subunit B from Rippkaea orientalis (strain PCC 8801 / RF-1) (Cyanothece sp. (strain PCC 8801)).